A 93-amino-acid chain; its full sequence is Small ribosomal subunit protein uS19 (93 aa).

The protein belongs to the universal ribosomal protein uS19 family.

In terms of biological role, protein S19 forms a complex with S13 that binds strongly to the 16S ribosomal RNA. This is Small ribosomal subunit protein uS19 from Alkaliphilus metalliredigens (strain QYMF).